Here is a 524-residue protein sequence, read N- to C-terminus: Protein hunchback (524 aa).

2 disordered regions span residues 42 to 86 and 101 to 187; these read IVKR…PQTQ and YNHN…DEQS. Residues 59 to 75 show a composition bias toward low complexity; that stretch reads SGSDFHSSSPSSDTSQD. Residues 76 to 86 show a composition bias toward polar residues; that stretch reads LQHSYQSPQTQ. Basic and acidic residues-rich tracts occupy residues 118–127, 138–154, and 164–178; these read KSEKEEKDME, RKPD…EMSL, and TSEH…KSDN. 4 consecutive C2H2-type zinc fingers follow at residues 202–224, 231–253, 259–281, and 298–311; these read FKCK…SKVH, LTCP…LRNH, FQCN…MKSH, and YCHS…RYGH. The tract at residues 402 to 442 is disordered; it reads DLSKPGCSYTGEQKSRRKGPAFKVDPTQVESEEEDEETSTT. C2H2-type zinc fingers lie at residues 471–493 and 499–523; these read NSCQ…MGYH and FTCN…RVSH.

The protein belongs to the hunchback C2H2-type zinc-finger protein family.

The protein resides in the nucleus. Its function is as follows. Gap class segmentation protein that controls development of head structures. This chain is Protein hunchback (hb), found in Tribolium castaneum (Red flour beetle).